The sequence spans 261 residues: Putative ketoacyl reductase (261 aa).

The NADP(+) site is built by threonine 15, serine 16, isoleucine 18, arginine 38, glycine 39, aspartate 63, valine 64, asparagine 90, tyrosine 157, lysine 161, valine 190, and threonine 192. The Proton acceptor role is filled by tyrosine 157.

This sequence belongs to the short-chain dehydrogenases/reductases (SDR) family. As to quaternary structure, homotetramer.

Its pathway is antibiotic biosynthesis; actinorhodin biosynthesis. This is Putative ketoacyl reductase (actIII) from Streptomyces coelicolor (strain ATCC BAA-471 / A3(2) / M145).